The primary structure comprises 109 residues: MTLIEQIITIGICIVAVQFTRLLPFFVFPVNRPIPQYIRYLGKVLPPAMFGMLVVYCYKNIEILTGYHGIPDLLAGIVVLGLHFWKKNMFLSIAVGTLFYMALVQLIFI.

A run of 3 helical transmembrane segments spans residues 7–27 (IITI…PFFV), 37–57 (YIRY…VVYC), and 63–83 (ILTG…LGLH).

This sequence belongs to the AzlD/HI_1737/HP1330 family.

Its subcellular location is the cell membrane. This is an uncharacterized protein from Haemophilus influenzae (strain ATCC 51907 / DSM 11121 / KW20 / Rd).